Consider the following 350-residue polypeptide: MNELDSLVESAQQLFAQAQTPADLENAKAQFLGKSGKVTELMKGMAQLSVEEKKSRGAAINVAKQGIEAALTARRKALADAELQAHLKAEVLDVTLPGRRRGQGGLHPVSLTLERIEGIFGSMGFDVAEGPEIESDWFNFTALNTPEDHPARSMHDTFYVEGGTEQAPNLLRTHTSPMQVRHAVQHVKKYRERLDAGQGMPEIRVIAPGRTYRVDSDATHSPMFHQCEGLWIGENVSFKDLKVVFTDFCKTFFESDDLVLRFRPSFFPFTEPSAEIDIQFQSGPLAGRWLEVAGSGQVHPNVVRNMGLDPEKYIGFAFGMGPDRLTMLRYGVNDLRLFFDGDIRFLSQFR.

Glu-271 is a binding site for Mg(2+).

Belongs to the class-II aminoacyl-tRNA synthetase family. Phe-tRNA synthetase alpha subunit type 1 subfamily. As to quaternary structure, tetramer of two alpha and two beta subunits. Requires Mg(2+) as cofactor.

The protein localises to the cytoplasm. The enzyme catalyses tRNA(Phe) + L-phenylalanine + ATP = L-phenylalanyl-tRNA(Phe) + AMP + diphosphate + H(+). The chain is Phenylalanine--tRNA ligase alpha subunit from Delftia acidovorans (strain DSM 14801 / SPH-1).